Reading from the N-terminus, the 251-residue chain is SRR1-like protein (251 aa).

The protein belongs to the SRR1 family.

Its subcellular location is the cytoplasm. It localises to the nucleus. The protein is SRR1-like protein of Schizosaccharomyces pombe (strain 972 / ATCC 24843) (Fission yeast).